The sequence spans 610 residues: Probable indole-3-acetic acid-amido synthetase GH3.1 (610 aa).

This sequence belongs to the IAA-amido conjugating enzyme family. Expressed in flowers.

Its function is as follows. May catalyze the synthesis of indole-3-acetic acid (IAA)-amino acid conjugates, providing a mechanism for the plant to cope with the presence of excess auxin. The protein is Probable indole-3-acetic acid-amido synthetase GH3.1 (GH3.1) of Oryza sativa subsp. japonica (Rice).